The sequence spans 230 residues: UPF0758 protein plu4865 (230 aa).

An MPN domain is found at 108–230 (IMSSPSVTQE…CVSFAERGWI (123 aa)). 3 residues coordinate Zn(2+): histidine 179, histidine 181, and aspartate 192. Positions 179–192 (HNHPSGHAEPSLAD) match the JAMM motif motif.

The protein belongs to the UPF0758 family. YicR subfamily.

The polypeptide is UPF0758 protein plu4865 (Photorhabdus laumondii subsp. laumondii (strain DSM 15139 / CIP 105565 / TT01) (Photorhabdus luminescens subsp. laumondii)).